A 428-amino-acid polypeptide reads, in one-letter code: Glial fibrillary acidic protein (428 aa).

Residues 1–68 are head; that stretch reads MERRRVTSAT…KETRASERAE (68 aa). Threonine 7 carries the phosphothreonine; by AURKB and ROCK1 modification. At arginine 12 the chain carries Omega-N-methylarginine. Serine 13 carries the phosphoserine; by AURKB and ROCK1 modification. Citrulline is present on residues arginine 26 and arginine 32. Serine 34 is modified (phosphoserine; by AURKB and ROCK1). Positions 65–373 constitute an IF rod domain; it reads ERAEMMELND…KLLEGEENRI (309 aa). Residues 69 to 100 form a coil 1A region; it reads MMELNDRFASYIEKVRFLEQQNKALAAELNQL. A Phosphoserine modification is found at serine 78. Residues 101 to 111 are linker 1; the sequence is RAKEPTKLADV. Phosphothreonine occurs at positions 106 and 146. A coil 1B region spans residues 112 to 210; the sequence is YQAELRELRL…EEEVRELQEQ (99 aa). Positions 211-226 are linker 12; that stretch reads LAQQQVHVEMDVAKPD. The coil 2A stretch occupies residues 227–248; the sequence is LTAALREIRTQYEAVASSNMHE. A linker 2 region spans residues 249–252; it reads AEEW. Residues 253–373 form a coil 2B region; it reads YRSKFADLND…KLLEGEENRI (121 aa). A Citrulline modification is found at arginine 266. Position 319 is a phosphoserine (serine 319). The tract at residues 374–428 is tail; sequence TIPVQTFSNLQIRETSLDTKSVSEGHLKRNIVVKTVEMRDGEVIKESKQEHKDVM. Threonine 379 carries the phosphothreonine modification. Serine 381 carries the post-translational modification Phosphoserine. Residues arginine 402 and arginine 412 each carry the citrulline modification.

Belongs to the intermediate filament family. Interacts with SYNM. In terms of processing, phosphorylated by PKN1.

Its subcellular location is the cytoplasm. GFAP, a class-III intermediate filament, is a cell-specific marker that, during the development of the central nervous system, distinguishes astrocytes from other glial cells. This chain is Glial fibrillary acidic protein (GFAP), found in Bos taurus (Bovine).